Reading from the N-terminus, the 202-residue chain is Holliday junction branch migration complex subunit RuvA (202 aa).

The tract at residues 1-65 is domain I; that stretch reads MIGYLEGRVV…EDALELFGFA (65 aa). The interval 66 to 144 is domain II; it reads SLDDRETFRT…GRAPAAGLAP (79 aa). Residues 145–155 form a flexible linker region; sequence SVPIPGGVAGD. Residues 155 to 202 are domain III; it reads DVVAGLTNLGYPEPEARQVAAEVLEAEPDLDVAAALRQALKRLASAKK.

This sequence belongs to the RuvA family. As to quaternary structure, homotetramer. Forms an RuvA(8)-RuvB(12)-Holliday junction (HJ) complex. HJ DNA is sandwiched between 2 RuvA tetramers; dsDNA enters through RuvA and exits via RuvB. An RuvB hexamer assembles on each DNA strand where it exits the tetramer. Each RuvB hexamer is contacted by two RuvA subunits (via domain III) on 2 adjacent RuvB subunits; this complex drives branch migration. In the full resolvosome a probable DNA-RuvA(4)-RuvB(12)-RuvC(2) complex forms which resolves the HJ.

It is found in the cytoplasm. The RuvA-RuvB-RuvC complex processes Holliday junction (HJ) DNA during genetic recombination and DNA repair, while the RuvA-RuvB complex plays an important role in the rescue of blocked DNA replication forks via replication fork reversal (RFR). RuvA specifically binds to HJ cruciform DNA, conferring on it an open structure. The RuvB hexamer acts as an ATP-dependent pump, pulling dsDNA into and through the RuvAB complex. HJ branch migration allows RuvC to scan DNA until it finds its consensus sequence, where it cleaves and resolves the cruciform DNA. The polypeptide is Holliday junction branch migration complex subunit RuvA (Solidesulfovibrio magneticus (strain ATCC 700980 / DSM 13731 / RS-1) (Desulfovibrio magneticus)).